Here is a 159-residue protein sequence, read N- to C-terminus: Photosystem I reaction center subunit XI (159 aa).

3 consecutive transmembrane segments (helical) span residues 53–73, 84–104, and 125–145; these read LEIG…LGPL, LISG…YGIV, and FTAG…TLLE.

This sequence belongs to the PsaL family.

It localises to the cellular thylakoid membrane. The sequence is that of Photosystem I reaction center subunit XI from Cyanothece sp. (strain PCC 7425 / ATCC 29141).